A 347-amino-acid polypeptide reads, in one-letter code: NADH-ubiquinone oxidoreductase chain 2 (347 aa).

The next 10 helical transmembrane spans lie at 13-33 (VILGTLIVMMSSHWLLIWIGF), 59-79 (YFFTQATASMLLMLAVLLNLM), 96-116 (MIMTMALTMKLGLAPFHFWVP), 122-142 (IPLSSGLILLTWQKLAPLTVL), 149-169 (INLTMLLTMSIASIAIGGWGG), 178-198 (IMAYSSIAHMGWMTTILIYNP), 200-220 (MTLLNLVIYILMTTTMFMLFM), 240-260 (IVTITLATLLSLGGLPPLTGF), 276-296 (IILPTIMAITALLNLFFYMRL), and 325-345 (LLTPMIVLSTLTLPPTPMIII).

It belongs to the complex I subunit 2 family. In terms of assembly, core subunit of respiratory chain NADH dehydrogenase (Complex I) which is composed of 45 different subunits. Interacts with TMEM242.

The protein resides in the mitochondrion inner membrane. The catalysed reaction is a ubiquinone + NADH + 5 H(+)(in) = a ubiquinol + NAD(+) + 4 H(+)(out). In terms of biological role, core subunit of the mitochondrial membrane respiratory chain NADH dehydrogenase (Complex I) which catalyzes electron transfer from NADH through the respiratory chain, using ubiquinone as an electron acceptor. Essential for the catalytic activity and assembly of complex I. The polypeptide is NADH-ubiquinone oxidoreductase chain 2 (Molossus ater (Black mastiff bat)).